A 242-amino-acid polypeptide reads, in one-letter code: C-reactive protein 3.3 (242 aa).

A signal peptide spans 1–24 (MKTFHGPTCGTAVSLCLLLFLTSA). The 212-residue stretch at 30-241 (ITSKVKFPPS…GVVLSPNEIC (212 aa)) folds into the Pentraxin (PTX) domain. Phosphocholine-binding residues include Thr60 and Tyr63. Disulfide bonds link Cys62/Cys125 and Cys112/Cys144. Positions 85 and 86 each coordinate Ca(2+). Residue Asn147 is glycosylated (N-linked (GlcNAc...) asparagine). Ca(2+) is bound by residues Gln169, Asp170, and Gln180. A disulfide bridge links Cys207 with Cys241.

It belongs to the pentraxin family. In terms of assembly, homopentamer. Pentraxin (or pentaxin) have a discoid arrangement of 5 non-covalently bound subunits. Requires Ca(2+) as cofactor.

It is found in the secreted. In terms of biological role, might serve the role of immunoglobulins. The protein is C-reactive protein 3.3 of Limulus polyphemus (Atlantic horseshoe crab).